Consider the following 142-residue polypeptide: MAKKVTGYLKLQVPAGAANPSPPIGPALGQRGLNIMEFCKAFNAQTQKEEKNTPIPVVITIYADRSFTFEMKTPPMSYFLKQAAKIQSGSKAPGRDKAGKVTKAQVREIAEKKMKDLNCDSIESAMKMVEGSARSMGLEVAG.

The protein belongs to the universal ribosomal protein uL11 family. Part of the ribosomal stalk of the 50S ribosomal subunit. Interacts with L10 and the large rRNA to form the base of the stalk. L10 forms an elongated spine to which L12 dimers bind in a sequential fashion forming a multimeric L10(L12)X complex. One or more lysine residues are methylated.

In terms of biological role, forms part of the ribosomal stalk which helps the ribosome interact with GTP-bound translation factors. In Bradyrhizobium sp. (strain BTAi1 / ATCC BAA-1182), this protein is Large ribosomal subunit protein uL11.